The chain runs to 640 residues: Probable serine/threonine-protein kinase samkA (640 aa).

The region spanning 21 to 84 (WNNEKIIKWL…SEFEILKNNY (64 aa)) is the SAM domain. A coiled-coil region spans residues 73 to 100 (FKSEFEILKNNYDNNNNNNNNNNNNNNN). The disordered stretch occupies residues 84-165 (YDNNNNNNNN…INFNSNSNIT (82 aa)). The Protein kinase domain maps to 191 to 437 (YEYVESISLG…SKDLQKLSWF (247 aa)). Residues 197-205 (ISLGVFSVV) and lysine 221 each bind ATP. The Proton acceptor role is filled by aspartate 312. The interval 448 to 482 (QELTKSTTNTTTTTTTTTTPPPPPSPSSSSPSMNE) is disordered. A compositionally biased stretch (low complexity) spans 453–465 (STTNTTTTTTTTT).

This sequence belongs to the protein kinase superfamily. Ser/Thr protein kinase family.

The catalysed reaction is L-seryl-[protein] + ATP = O-phospho-L-seryl-[protein] + ADP + H(+). It catalyses the reaction L-threonyl-[protein] + ATP = O-phospho-L-threonyl-[protein] + ADP + H(+). The chain is Probable serine/threonine-protein kinase samkA (samkA) from Dictyostelium discoideum (Social amoeba).